We begin with the raw amino-acid sequence, 186 residues long: Acetyltransferase PA2578 (186 aa).

The region spanning 12-176 is the N-acetyltransferase domain; sequence LQLVPFQLGH…NVVLMGLLRQ (165 aa). CoA is bound by residues Gln-37, 97–99, Gly-105, Asn-137, and 142–144; these read IVL and HLY.

As to quaternary structure, homodimer.

Functionally, catalyzes the transfer of an acetyl group from acetyl coenzyme A (AcCoA) to an acceptor substrate and releases both CoA and the acetylated product. It prefers the antibiotic chloramphenicol. The chain is Acetyltransferase PA2578 from Pseudomonas aeruginosa (strain ATCC 15692 / DSM 22644 / CIP 104116 / JCM 14847 / LMG 12228 / 1C / PRS 101 / PAO1).